The following is a 247-amino-acid chain: 2,3-bisphosphoglycerate-dependent phosphoglycerate mutase (247 aa).

Substrate is bound by residues 8-15 (RHGESTWN), 21-22 (TG), Arg60, 87-90 (ERHY), Lys98, 114-115 (RR), and 183-184 (GN). The active-site Tele-phosphohistidine intermediate is the His9. Glu87 acts as the Proton donor/acceptor in catalysis.

Belongs to the phosphoglycerate mutase family. BPG-dependent PGAM subfamily. As to quaternary structure, homodimer.

The enzyme catalyses (2R)-2-phosphoglycerate = (2R)-3-phosphoglycerate. It participates in carbohydrate degradation; glycolysis; pyruvate from D-glyceraldehyde 3-phosphate: step 3/5. In terms of biological role, catalyzes the interconversion of 2-phosphoglycerate and 3-phosphoglycerate. This Paracidovorax citrulli (strain AAC00-1) (Acidovorax citrulli) protein is 2,3-bisphosphoglycerate-dependent phosphoglycerate mutase.